A 637-amino-acid chain; its full sequence is 1-deoxy-D-xylulose-5-phosphate synthase (637 aa).

Thiamine diphosphate is bound by residues histidine 76 and glycine 117–serine 119. Aspartate 148 contacts Mg(2+). Residues glycine 149 to alanine 150, asparagine 177, tyrosine 294, and glutamate 381 contribute to the thiamine diphosphate site. Residue asparagine 177 participates in Mg(2+) binding.

It belongs to the transketolase family. DXPS subfamily. In terms of assembly, homodimer. Mg(2+) is required as a cofactor. It depends on thiamine diphosphate as a cofactor.

It catalyses the reaction D-glyceraldehyde 3-phosphate + pyruvate + H(+) = 1-deoxy-D-xylulose 5-phosphate + CO2. The protein operates within metabolic intermediate biosynthesis; 1-deoxy-D-xylulose 5-phosphate biosynthesis; 1-deoxy-D-xylulose 5-phosphate from D-glyceraldehyde 3-phosphate and pyruvate: step 1/1. Functionally, catalyzes the acyloin condensation reaction between C atoms 2 and 3 of pyruvate and glyceraldehyde 3-phosphate to yield 1-deoxy-D-xylulose-5-phosphate (DXP). The protein is 1-deoxy-D-xylulose-5-phosphate synthase of Neisseria gonorrhoeae (strain NCCP11945).